Here is a 344-residue protein sequence, read N- to C-terminus: GLIPR1-like protein 2 (344 aa).

Positions 58–192 (VNLHNELRGD…IHAAIFICNY (135 aa)) constitute an SCP domain. A helical transmembrane segment spans residues 254–274 (TFILLLRILCFILCVITVLIV). Acidic residues-rich tracts occupy residues 292-304 (EESE…EEKE) and 312-334 (EMEM…EEET). The segment at 292–344 (EESEAGNEEEEKEEEKKEKEEMEMEIMEMEEEKEEREEEEEETQKEKMEEEEK) is disordered. A compositionally biased stretch (basic and acidic residues) spans 335 to 344 (QKEKMEEEEK).

Belongs to the CRISP family. As to expression, highly expressed in testis. Detected in prostate, kidney, bladder, lung and bone marrow.

The protein localises to the membrane. In Homo sapiens (Human), this protein is GLIPR1-like protein 2 (GLIPR1L2).